Reading from the N-terminus, the 66-residue chain is MSFSSLYKTFFKRNAVFVGTIFAGAFVFQTVFDTAITSWYENHNKGKLWKDVKARIAAGDGDDDDE.

Over 2 to 17 (SFSSLYKTFFKRNAVF) the chain is Mitochondrial matrix. A helical transmembrane segment spans residues 18 to 43 (VGTIFAGAFVFQTVFDTAITSWYENH). The Mitochondrial intermembrane segment spans residues 44–66 (NKGKLWKDVKARIAAGDGDDDDE).

It belongs to the UQCR10/QCR9 family. As to quaternary structure, component of the ubiquinol-cytochrome c oxidoreductase (cytochrome b-c1 complex, complex III, CIII), a multisubunit enzyme composed of 10 subunits. The complex is composed of 3 respiratory subunits cytochrome b (COB), cytochrome c1 (CYT1) and Rieske protein (RIP1), 2 core protein subunits COR1 and QCR2, and 5 low-molecular weight protein subunits QCR6, QCR7, QCR8, QCR9 and QCR10. The complex exists as an obligatory dimer and forms supercomplexes (SCs) in the inner mitochondrial membrane with a monomer or a dimer of cytochrome c oxidase (complex IV, CIV), resulting in 2 different assemblies (supercomplexes III(2)IV and III(2)IV(2)). Interacts with the transmembrane segment of RIP1.

The protein resides in the mitochondrion inner membrane. Functionally, component of the ubiquinol-cytochrome c oxidoreductase, a multisubunit transmembrane complex that is part of the mitochondrial electron transport chain which drives oxidative phosphorylation. The respiratory chain contains 3 multisubunit complexes succinate dehydrogenase (complex II, CII), ubiquinol-cytochrome c oxidoreductase (cytochrome b-c1 complex, complex III, CIII) and cytochrome c oxidase (complex IV, CIV), that cooperate to transfer electrons derived from NADH and succinate to molecular oxygen, creating an electrochemical gradient over the inner membrane that drives transmembrane transport and the ATP synthase. The cytochrome b-c1 complex catalyzes electron transfer from ubiquinol to cytochrome c, linking this redox reaction to translocation of protons across the mitochondrial inner membrane, with protons being carried across the membrane as hydrogens on the quinol. In the process called Q cycle, 2 protons are consumed from the matrix, 4 protons are released into the intermembrane space and 2 electrons are passed to cytochrome c. This Saccharomyces cerevisiae (strain ATCC 204508 / S288c) (Baker's yeast) protein is Cytochrome b-c1 complex subunit 9, mitochondrial (QCR9).